Consider the following 201-residue polypeptide: MAASKAAKSSEDRAGGGGGGGGKEVFKAGRTLLKVLKALSLRRDSAFEANSASAANLAAEGGGGGGRAATSRSRRILLMAAFWAARRGASCAALTAARAAAFLALAMAAYLAALRARMCSRMICWPLTASLFFRAANCCLCVRGGGGGASPLQGRRSQGAVIAASSAERTTSIAVEVCLAEGTAKGPFEGWSNLCCPTRAG.

A disordered region spans residues 1 to 22 (MAASKAAKSSEDRAGGGGGGGG).

This is an uncharacterized protein from Tomato ringspot virus (isolate raspberry) (ToRSV).